The sequence spans 264 residues: MTMEILLVNDDGIYSNGLLALKNVISEEFDANITVVAPTNQQSGIGRAISLFEPLRITKTKLADCSEGYAVSGTPTDCVVLGVHQVLKKVPDYVISGINIGENLGTEITTSGTLGAAFEGAHHGAKALACSLQVTTDHLKFKEGESPIDFMNTARIVRNVFKKFIDDEFPCDVININVPDNATENTPVEITKLAKKMYSMHVEERIDPRSRSYYWLDGYPIMDEEDGTDVYAVRNKRNVSVTPLTLDNTAKNLDEFKEKYAKKF.

The a divalent metal cation site is built by aspartate 10, aspartate 11, serine 43, and asparagine 99.

This sequence belongs to the SurE nucleotidase family. The cofactor is a divalent metal cation.

The protein localises to the cytoplasm. The enzyme catalyses a ribonucleoside 5'-phosphate + H2O = a ribonucleoside + phosphate. In terms of biological role, nucleotidase that shows phosphatase activity on nucleoside 5'-monophosphates. The chain is 5'-nucleotidase SurE from Methanococcus maripaludis (strain C5 / ATCC BAA-1333).